The primary structure comprises 150 residues: Ribonuclease HI (150 aa).

The region spanning 1 to 141 is the RNase H type-1 domain; sequence MKSINAYTDG…VDVLARGQAM (141 aa). Residues D9, E47, D69, and D133 each coordinate Mg(2+).

Belongs to the RNase H family. As to quaternary structure, monomer. Mg(2+) is required as a cofactor.

Its subcellular location is the cytoplasm. It carries out the reaction Endonucleolytic cleavage to 5'-phosphomonoester.. Its function is as follows. Endonuclease that specifically degrades the RNA of RNA-DNA hybrids. This Xylella fastidiosa (strain 9a5c) protein is Ribonuclease HI.